The following is a 70-amino-acid chain: MADQIQEILDVPREFLKDGIQFIKKCQKPDRREFIKISQAVGTGFLIMGAVGYLVKLIHIPLNQVLVGGA.

At 1 to 39 (MADQIQEILDVPREFLKDGIQFIKKCQKPDRREFIKISQ) the chain is on the cytoplasmic side. A helical transmembrane segment spans residues 40 to 58 (AVGTGFLIMGAVGYLVKLI). Topologically, residues 59 to 70 (HIPLNQVLVGGA) are extracellular.

Belongs to the SecE/SEC61-gamma family. Heterotrimeric complex composed of SEC61-alpha, SEC61-beta and SEC61-gamma.

Its subcellular location is the endoplasmic reticulum membrane. Functionally, necessary for protein translocation in the endoplasmic reticulum. This chain is Probable protein transport protein Sec61 subunit gamma, found in Neurospora crassa (strain ATCC 24698 / 74-OR23-1A / CBS 708.71 / DSM 1257 / FGSC 987).